A 446-amino-acid polypeptide reads, in one-letter code: 3-phosphoshikimate 1-carboxyvinyltransferase (446 aa).

A disordered region spans residues 1-20; the sequence is MSTWPAPSTATPVHATVTVP. 3-phosphoshikimate contacts are provided by lysine 23, serine 24, and arginine 28. Residue lysine 23 participates in phosphoenolpyruvate binding. Phosphoenolpyruvate is bound by residues glycine 100 and arginine 128. Residues serine 171, serine 172, glutamine 173, serine 200, glutamate 315, and histidine 344 each coordinate 3-phosphoshikimate. Phosphoenolpyruvate is bound at residue glutamine 173. Residue glutamate 315 is the Proton acceptor of the active site. The phosphoenolpyruvate site is built by arginine 348, arginine 389, and lysine 414.

The protein belongs to the EPSP synthase family. Monomer.

The protein resides in the cytoplasm. It catalyses the reaction 3-phosphoshikimate + phosphoenolpyruvate = 5-O-(1-carboxyvinyl)-3-phosphoshikimate + phosphate. It functions in the pathway metabolic intermediate biosynthesis; chorismate biosynthesis; chorismate from D-erythrose 4-phosphate and phosphoenolpyruvate: step 6/7. Catalyzes the transfer of the enolpyruvyl moiety of phosphoenolpyruvate (PEP) to the 5-hydroxyl of shikimate-3-phosphate (S3P) to produce enolpyruvyl shikimate-3-phosphate and inorganic phosphate. This Mycolicibacterium vanbaalenii (strain DSM 7251 / JCM 13017 / BCRC 16820 / KCTC 9966 / NRRL B-24157 / PYR-1) (Mycobacterium vanbaalenii) protein is 3-phosphoshikimate 1-carboxyvinyltransferase.